The sequence spans 121 residues: UPF0045 protein sll0230 (121 aa).

It belongs to the UPF0045 family.

The chain is UPF0045 protein sll0230 from Synechocystis sp. (strain ATCC 27184 / PCC 6803 / Kazusa).